The sequence spans 250 residues: DNA repair protein RecO (250 aa).

Belongs to the RecO family.

Its function is as follows. Involved in DNA repair and RecF pathway recombination. The polypeptide is DNA repair protein RecO (Rhodopseudomonas palustris (strain ATCC BAA-98 / CGA009)).